A 216-amino-acid polypeptide reads, in one-letter code: Small ribosomal subunit protein uS3 (216 aa).

The 70-residue stretch at Ile24–Ser93 folds into the KH type-2 domain.

It belongs to the universal ribosomal protein uS3 family. In terms of assembly, part of the 30S ribosomal subunit.

Its function is as follows. Binds the lower part of the 30S subunit head. This chain is Small ribosomal subunit protein uS3, found in Pyrobaculum calidifontis (strain DSM 21063 / JCM 11548 / VA1).